The primary structure comprises 415 residues: Nacrein-like protein F (415 aa).

A glycan (N-linked (GlcNAc...) asparagine) is linked at Asn27. The region spanning 33–414 (AGFSYDRSIC…KNKVTVYKSF (382 aa)) is the Alpha-carbonic anhydrase domain. Zn(2+) is bound by residues His132, His134, and His157. The segment at 201–297 (DEPDDEECKH…GENGHKHGCR (97 aa)) is disordered. The segment covering 207–219 (ECKHILKGHHPDN) has biased composition (basic and acidic residues). Low complexity predominate over residues 220–289 (NENGNGDNGN…NNGENGNNGE (70 aa)). Repeat copies occupy residues 225–227 (GDN), 228–230 (GNN), 231–233 (GYN), 234–236 (GDN), 237–239 (GNN), 240–242 (GDN), 243–245 (GNN), 246–248 (GYN), 249–251 (GDN), 252–254 (GNN), 255–257 (GVN), 258–260 (GNN), 261–263 (GYN), 264–266 (GDN), 267–269 (GNN), 270–272 (GDN), 273–275 (GNN), 276–278 (GEN), 279–281 (GNN), 282–284 (GEN), 285–286 (GN), and 288–290 (GEN). Residues 225-290 (GDNGNNGYNG…NGENGNNGEN (66 aa)) form a 22 X 3 AA approximate tandem repeats of G-X-N region. 355–356 (TT) serves as a coordination point for substrate.

This sequence belongs to the alpha-carbonic anhydrase family. In terms of assembly, homooligomer; disulfide-linked. May also be disulfide-linked to insoluble organic matrix. It depends on Zn(2+) as a cofactor. In terms of tissue distribution, expressed in the mantle.

It is found in the secreted. Its subcellular location is the extracellular space. The protein resides in the extracellular matrix. It catalyses the reaction hydrogencarbonate + H(+) = CO2 + H2O. Its function is as follows. Acts as a negative regulator for calcification in the shells of mollusks. May function both as a calcium concentrator and as a carbonic anhydrase required for production of carbonate ions, which are assembled to CaCO(3) at mineralization sites. Is important for shell formation in both the calcitic prismatic layer and the aragonitic nacreous layer. Shows inhibitory activity of crystal formation when present in free state but, when attached to the insoluble matrix, may regulate the form and size of aragonite crystal. This is Nacrein-like protein F from Pinctada fucata (Akoya pearl oyster).